We begin with the raw amino-acid sequence, 424 residues long: Histidine--tRNA ligase (424 aa).

Belongs to the class-II aminoacyl-tRNA synthetase family. As to quaternary structure, homodimer.

It localises to the cytoplasm. The catalysed reaction is tRNA(His) + L-histidine + ATP = L-histidyl-tRNA(His) + AMP + diphosphate + H(+). The sequence is that of Histidine--tRNA ligase from Shigella dysenteriae serotype 1 (strain Sd197).